We begin with the raw amino-acid sequence, 420 residues long: Transcriptional regulator Myc-B (420 aa).

Residues 78 to 86 carry the 9aaTAD motif; that stretch reads EMVTEFLGG. Disordered stretches follow at residues 141-181, 203-275, and 319-345; these read ALST…LQDP, ASSP…HHSP, and SNNRKCASPRSSDSEENDKRRTHNVLE. A compositionally biased stretch (low complexity) spans 143–160; that stretch reads STSQCQSQPPQSPLKSPS. A compositionally biased stretch (polar residues) spans 161 to 172; the sequence is CDGSLNLGGTNR. Acidic residues predominate over residues 225 to 246; the sequence is ESEDEQEDDDDDEDCDEEEEID. Over residues 249-262 the composition is skewed to basic and acidic residues; it reads TVEKRQTASRRMES. Residues 319 to 329 are compositionally biased toward polar residues; that stretch reads SNNRKCASPRS. Positions 336-388 constitute a bHLH domain; the sequence is DKRRTHNVLERQRRNELKLSFFALRDQVPRWRNNEKAPKVVILKKATEYAISM. The leucine-zipper stretch occupies residues 395 to 416; it reads LIRETEQLKYRKEQLKQRLQQL.

Efficient DNA binding requires dimerization with another bHLH protein. Binds DNA as a heterodimer with MAX.

It localises to the nucleus. Functionally, transcription factor that binds DNA in a non-specific manner, yet also specifically recognizes the core sequence 5'-CAC[GA]TG-3'. Activates the transcription of growth-related genes. The protein is Transcriptional regulator Myc-B (myc-b) of Xenopus laevis (African clawed frog).